We begin with the raw amino-acid sequence, 131 residues long: Large ribosomal subunit protein bL19 (131 aa).

The segment at 112 to 131 is disordered; the sequence is KSARIAERAGGPKASASTEA.

The protein belongs to the bacterial ribosomal protein bL19 family.

In terms of biological role, this protein is located at the 30S-50S ribosomal subunit interface and may play a role in the structure and function of the aminoacyl-tRNA binding site. This chain is Large ribosomal subunit protein bL19, found in Caulobacter vibrioides (strain ATCC 19089 / CIP 103742 / CB 15) (Caulobacter crescentus).